The following is an 82-amino-acid chain: ATP synthase subunit c (82 aa).

The next 2 membrane-spanning stretches (helical) occupy residues 7–27 (LVAL…CIGI) and 53–73 (FLLA…AMLF).

Belongs to the ATPase C chain family. As to quaternary structure, F-type ATPases have 2 components, F(1) - the catalytic core - and F(0) - the membrane proton channel. F(1) has five subunits: alpha(3), beta(3), gamma(1), delta(1), epsilon(1). F(0) has three main subunits: a(1), b(2) and c(10-14). The alpha and beta chains form an alternating ring which encloses part of the gamma chain. F(1) is attached to F(0) by a central stalk formed by the gamma and epsilon chains, while a peripheral stalk is formed by the delta and b chains.

It localises to the cell inner membrane. F(1)F(0) ATP synthase produces ATP from ADP in the presence of a proton or sodium gradient. F-type ATPases consist of two structural domains, F(1) containing the extramembraneous catalytic core and F(0) containing the membrane proton channel, linked together by a central stalk and a peripheral stalk. During catalysis, ATP synthesis in the catalytic domain of F(1) is coupled via a rotary mechanism of the central stalk subunits to proton translocation. In terms of biological role, key component of the F(0) channel; it plays a direct role in translocation across the membrane. A homomeric c-ring of between 10-14 subunits forms the central stalk rotor element with the F(1) delta and epsilon subunits. This chain is ATP synthase subunit c, found in Leptothrix cholodnii (strain ATCC 51168 / LMG 8142 / SP-6) (Leptothrix discophora (strain SP-6)).